A 194-amino-acid polypeptide reads, in one-letter code: uncharacterized protein (194 aa).

An N-terminal signal peptide occupies residues 1-15 (MFVLSIALLSCTTLC). In terms of domain architecture, PAN spans 49–134 (CPQGLHADAI…KATYYEKIRC (86 aa)). Disulfide bonds link cysteine 49-cysteine 134 and cysteine 79-cysteine 106.

This is an uncharacterized protein from Caenorhabditis elegans.